Consider the following 1242-residue polypeptide: von Willebrand factor A domain-containing protein 5B2 (1242 aa).

The 138-residue stretch at 1–138 folds into the VIT domain; sequence MPGLYCPSSW…TMTVTLHSSR (138 aa). Positions 354–527 constitute a VWFA domain; the sequence is ELLFLLDSSS…KALEPALSDI (174 aa). Disordered regions lie at residues 569-650, 670-726, 751-794, 957-976, 987-1055, and 1118-1159; these read SRPP…SDTA, CSAS…CPLP, LAGR…GQGL, CSSE…SHLD, KGLQ…GSDH, and QGDS…GLGG. Over residues 588-604 the composition is skewed to low complexity; it reads PSPEEAPSAASPGTEPT. Polar residues predominate over residues 605–619; sequence GTSEPLGTGTVSAEL. The span at 681–700 shows a compositional bias: low complexity; it reads TGSSESPGSQGPGSPEGSAP. Residues 1125 to 1138 are compositionally biased toward low complexity; the sequence is SCSPSPSSGSEGPG.

This Homo sapiens (Human) protein is von Willebrand factor A domain-containing protein 5B2 (VWA5B2).